A 532-amino-acid chain; its full sequence is Arginine--tRNA ligase (532 aa).

The 'HIGH' region motif lies at 122 to 132 (ANPTGPLHVAS).

The protein belongs to the class-I aminoacyl-tRNA synthetase family. As to quaternary structure, monomer.

Its subcellular location is the cytoplasm. The enzyme catalyses tRNA(Arg) + L-arginine + ATP = L-arginyl-tRNA(Arg) + AMP + diphosphate. In Elusimicrobium minutum (strain Pei191), this protein is Arginine--tRNA ligase.